The sequence spans 653 residues: UvrABC system protein B (653 aa).

The region spanning 25-182 (EGIERGVREQ…EKLVELQYKS (158 aa)) is the Helicase ATP-binding domain. 38–45 (GVTGSGKT) is an ATP binding site. The short motif at 91 to 114 (YYDYYQPEAYIPHSDVYIEKDALI) is the Beta-hairpin element. The Helicase C-terminal domain maps to 429 to 591 (QIADVVNESQ…ITPKSISKSV (163 aa)). The UVR domain occupies 616–651 (EEDIIKLQKEMLLHAENLEFEKALEIRNQINKLSQH).

This sequence belongs to the UvrB family. In terms of assembly, forms a heterotetramer with UvrA during the search for lesions. Interacts with UvrC in an incision complex.

The protein localises to the cytoplasm. Functionally, the UvrABC repair system catalyzes the recognition and processing of DNA lesions. A damage recognition complex composed of 2 UvrA and 2 UvrB subunits scans DNA for abnormalities. Upon binding of the UvrA(2)B(2) complex to a putative damaged site, the DNA wraps around one UvrB monomer. DNA wrap is dependent on ATP binding by UvrB and probably causes local melting of the DNA helix, facilitating insertion of UvrB beta-hairpin between the DNA strands. Then UvrB probes one DNA strand for the presence of a lesion. If a lesion is found the UvrA subunits dissociate and the UvrB-DNA preincision complex is formed. This complex is subsequently bound by UvrC and the second UvrB is released. If no lesion is found, the DNA wraps around the other UvrB subunit that will check the other stand for damage. This Anaplasma phagocytophilum (strain HZ) protein is UvrABC system protein B.